We begin with the raw amino-acid sequence, 262 residues long: Ubiquinone biosynthesis protein COQ4, mitochondrial (262 aa).

Zn(2+) contacts are provided by His-154, Asp-155, His-158, and Glu-170. The interval 243–262 is disordered; the sequence is LGIEQPPDLRQMKKDMAKKK. Residues 252 to 262 are compositionally biased toward basic and acidic residues; that stretch reads RQMKKDMAKKK.

This sequence belongs to the COQ4 family. As to quaternary structure, component of a multi-subunit COQ enzyme complex, composed of at least COQ3, COQ4, COQ5, COQ6, COQ7 and COQ9. It depends on Zn(2+) as a cofactor.

It localises to the mitochondrion inner membrane. The catalysed reaction is a 4-hydroxy-3-methoxy-5-(all-trans-polyprenyl)benzoate + H(+) = a 2-methoxy-6-(all-trans-polyprenyl)phenol + CO2. It participates in cofactor biosynthesis; ubiquinone biosynthesis. Its function is as follows. Lyase that catalyzes the C1-decarboxylation of 4-hydroxy-3-methoxy-5-(all-trans-polyprenyl)benzoic acid into 2-methoxy-6-(all-trans-polyprenyl)phenol during ubiquinone biosynthesis. This is Ubiquinone biosynthesis protein COQ4, mitochondrial from Yarrowia lipolytica (strain CLIB 122 / E 150) (Yeast).